A 143-amino-acid polypeptide reads, in one-letter code: Flagellar assembly factor FliW (143 aa).

The protein belongs to the FliW family. As to quaternary structure, interacts with translational regulator CsrA and flagellin(s).

It localises to the cytoplasm. Acts as an anti-CsrA protein, binds CsrA and prevents it from repressing translation of its target genes, one of which is flagellin. Binds to flagellin and participates in the assembly of the flagellum. In Clostridium botulinum (strain Langeland / NCTC 10281 / Type F), this protein is Flagellar assembly factor FliW.